A 344-amino-acid polypeptide reads, in one-letter code: Ferredoxin--NADP reductase (344 aa).

Serine 12, aspartate 31, lysine 39, tyrosine 43, valine 83, isoleucine 118, aspartate 285, and serine 326 together coordinate FAD.

The protein belongs to the ferredoxin--NADP reductase type 2 family. Homodimer. It depends on FAD as a cofactor.

It catalyses the reaction 2 reduced [2Fe-2S]-[ferredoxin] + NADP(+) + H(+) = 2 oxidized [2Fe-2S]-[ferredoxin] + NADPH. The polypeptide is Ferredoxin--NADP reductase (Staphylococcus aureus (strain MW2)).